Reading from the N-terminus, the 568-residue chain is MHKLIELIEKGKPFFEKISRNIYLRAIRDGFIAGMPVILFSSIFILIAYVPNAWGFHWSKDIETFLMTPYSYSMGILAFFVGGTTAKALTDSKNRDLPATNQINFLSTMLASMVGFLLMAAEPAKEGGFLTAFMGTKGLLTAFIAAFVTVNVYKVCVKNNVTIRMPEDVPPNISQVFKDLIPFTVSVVLLYGLELLVKGTLGVTVAESIGTLIAPLFSAADGYLGITLIFGAYAFFWFVGIHGPSIVEPAIAAITYANIDVNLHLIQAGQHADKVITSGTQMFIATMGGTGATLIVPFLFMWICKSDRNRAIGRASVVPTFFGVNEPILFGAPIVLNPIFFVPFIFAPIVNVWIFKFFVDTLNMNSFSANLPWVTPGPLGIVLGTNFQVLSFILAGLLVVVDTIIYYPFVKVYDEQILEEERSGKTNDALKEKVAANFNTAKADAVLGKADVAKEDVAANNNITKETNVLVLCAGGGTSGLLANALNKAAAEYNVPVKAAAGGYGAHREMLPEFDLVILAPQVASNFDDMKAETDKLGIKLVKTEGAQYIKLTRDGQGALAFVQQQFD.

In terms of domain architecture, PTS EIIC type-3 spans 7-409; it reads LIEKGKPFFE…VVDTIIYYPF (403 aa). A run of 9 helical transmembrane segments spans residues 30-50, 62-82, 103-123, 128-148, 183-203, 222-242, 283-303, 339-359, and 389-409; these read GFIA…IAYV, IETF…FFVG, INFL…AAEP, GFLT…AAFV, FTVS…TLGV, GYLG…VGIH, FIAT…FMWI, IFFV…KFFV, and VLSF…YYPF. The region spanning 466–568 is the PTS EIIB type-3 domain; that stretch reads ETNVLVLCAG…ALAFVQQQFD (103 aa). The active-site Phosphocysteine intermediate; for EIIB activity is the Cys473. Cys473 is modified (phosphocysteine; by EIIA).

Its subcellular location is the cell membrane. It catalyses the reaction lactose(out) + N(pros)-phospho-L-histidyl-[protein] = lactose 6-phosphate(in) + L-histidyl-[protein]. The phosphoenolpyruvate-dependent sugar phosphotransferase system (sugar PTS), a major carbohydrate active transport system, catalyzes the phosphorylation of incoming sugar substrates concomitantly with their translocation across the cell membrane. The enzyme II LacEF PTS system is involved in lactose transport. The protein is PTS system lactose-specific EIICB component of Lactococcus lactis subsp. lactis (Streptococcus lactis).